Reading from the N-terminus, the 199-residue chain is Dephospho-CoA kinase (199 aa).

Positions 11 to 199 (RIGLTGGIAS…DLHDQLDALL (189 aa)) constitute a DPCK domain. Position 19 to 24 (19 to 24 (ASGKSS)) interacts with ATP.

The protein belongs to the CoaE family.

The protein resides in the cytoplasm. It carries out the reaction 3'-dephospho-CoA + ATP = ADP + CoA + H(+). It functions in the pathway cofactor biosynthesis; coenzyme A biosynthesis; CoA from (R)-pantothenate: step 5/5. Its function is as follows. Catalyzes the phosphorylation of the 3'-hydroxyl group of dephosphocoenzyme A to form coenzyme A. The protein is Dephospho-CoA kinase of Synechococcus sp. (strain CC9902).